Consider the following 511-residue polypeptide: Histidine ammonia-lyase (511 aa).

The 5-imidazolinone (Ala-Gly) cross-link spans 142 to 144 (ASG). 2,3-didehydroalanine (Ser) is present on Ser143.

It belongs to the PAL/histidase family. Contains an active site 4-methylidene-imidazol-5-one (MIO), which is formed autocatalytically by cyclization and dehydration of residues Ala-Ser-Gly.

The protein localises to the cytoplasm. It catalyses the reaction L-histidine = trans-urocanate + NH4(+). The protein operates within amino-acid degradation; L-histidine degradation into L-glutamate; N-formimidoyl-L-glutamate from L-histidine: step 1/3. The sequence is that of Histidine ammonia-lyase from Caulobacter sp. (strain K31).